The following is a 283-amino-acid chain: Bifunctional protein FolD (283 aa).

Residues 165–167 (GAS) and Ser-190 contribute to the NADP(+) site.

Belongs to the tetrahydrofolate dehydrogenase/cyclohydrolase family. As to quaternary structure, homodimer.

The catalysed reaction is (6R)-5,10-methylene-5,6,7,8-tetrahydrofolate + NADP(+) = (6R)-5,10-methenyltetrahydrofolate + NADPH. It carries out the reaction (6R)-5,10-methenyltetrahydrofolate + H2O = (6R)-10-formyltetrahydrofolate + H(+). The protein operates within one-carbon metabolism; tetrahydrofolate interconversion. Catalyzes the oxidation of 5,10-methylenetetrahydrofolate to 5,10-methenyltetrahydrofolate and then the hydrolysis of 5,10-methenyltetrahydrofolate to 10-formyltetrahydrofolate. The chain is Bifunctional protein FolD from Cupriavidus taiwanensis (strain DSM 17343 / BCRC 17206 / CCUG 44338 / CIP 107171 / LMG 19424 / R1) (Ralstonia taiwanensis (strain LMG 19424)).